A 326-amino-acid polypeptide reads, in one-letter code: Porin-like protein H (326 aa).

A signal peptide spans Met1–Ala19.

It belongs to the Gram-negative porin family. In terms of assembly, oligomer.

The protein localises to the cell outer membrane. Its function is as follows. Forms pores that allow passive diffusion of small molecules across the outer membrane. This Photobacterium profundum (strain SS9) protein is Porin-like protein H (ompH).